Here is a 540-residue protein sequence, read N- to C-terminus: Tyrosinase (540 aa).

Residues 1–19 form the signal peptide; the sequence is MKSLFLSAVLLQFFETCWS. Residues 20 to 480 are Lumenal, melanosome-facing; the sequence is QFPRPCANSE…LQQAQQIWQW (461 aa). An N-linked (GlcNAc...) asparagine glycan is attached at N87. Residues H182, H205, and H214 each contribute to the Cu cation site. N-linked (GlcNAc...) asparagine glycosylation is found at N233, N293, and N340. Cu cation contacts are provided by H366 and H370. A glycan (N-linked (GlcNAc...) asparagine) is linked at N374. H393 serves as a coordination point for Cu cation. A helical transmembrane segment spans residues 481–501; it reads LLGAGILGALIATIVAAVIVF. The Cytoplasmic segment spans residues 502–540; it reads ARRKRRRNQKRKRAPSFGERQPLLQSSSEEGSSSYQTTL. Residues 511 to 540 are disordered; the sequence is KRKRAPSFGERQPLLQSSSEEGSSSYQTTL. Residues 527-540 show a composition bias toward low complexity; that stretch reads SSSEEGSSSYQTTL.

This sequence belongs to the tyrosinase family. Requires Cu(2+) as cofactor.

Its subcellular location is the melanosome membrane. It carries out the reaction 2 L-dopa + O2 = 2 L-dopaquinone + 2 H2O. It catalyses the reaction L-tyrosine + O2 = L-dopaquinone + H2O. In terms of biological role, this is a copper-containing oxidase that functions in the formation of pigments such as melanins and other polyphenolic compounds. In Oryzias latipes (Japanese rice fish), this protein is Tyrosinase (tyr).